Reading from the N-terminus, the 671-residue chain is DNA ligase (671 aa).

Residues 32-36 (DVEYD), 81-82 (SL), and E113 contribute to the NAD(+) site. K115 serves as the catalytic N6-AMP-lysine intermediate. NAD(+) is bound by residues R136, E173, K290, and K314. Residues C408, C411, C426, and C432 each coordinate Zn(2+). One can recognise a BRCT domain in the interval 593 to 671 (EIDSPFAGKT…EAEMLRLLGS (79 aa)).

This sequence belongs to the NAD-dependent DNA ligase family. LigA subfamily. It depends on Mg(2+) as a cofactor. Mn(2+) is required as a cofactor.

It carries out the reaction NAD(+) + (deoxyribonucleotide)n-3'-hydroxyl + 5'-phospho-(deoxyribonucleotide)m = (deoxyribonucleotide)n+m + AMP + beta-nicotinamide D-nucleotide.. DNA ligase that catalyzes the formation of phosphodiester linkages between 5'-phosphoryl and 3'-hydroxyl groups in double-stranded DNA using NAD as a coenzyme and as the energy source for the reaction. It is essential for DNA replication and repair of damaged DNA. This chain is DNA ligase, found in Escherichia coli O17:K52:H18 (strain UMN026 / ExPEC).